Consider the following 903-residue polypeptide: Ras and Rab interactor 2 (903 aa).

The tract at residues 44–73 is disordered; that stretch reads NGLEPSETHSMVRHKDGGYSEDKDGKTCPR. Over residues 56-73 the composition is skewed to basic and acidic residues; the sequence is RHKDGGYSEDKDGKTCPR. The 94-residue stretch at 97 to 190 folds into the SH2 domain; the sequence is WLQLSLSEEE…VLPFTLKLPY (94 aa). Disordered regions lie at residues 282-455 and 471-491; these read QDLS…EFDR and EDYEGESDQETMAPPIKSKKK. Over residues 306–315 the composition is skewed to pro residues; the sequence is SPPPRPPPPA. Residues 318 to 338 are compositionally biased toward polar residues; that stretch reads SLHTSPGLSRTEPQTSMPETV. S366 is modified (phosphoserine). Positions 419-431 are enriched in pro residues; sequence APPPGSESQPPPC. A compositionally biased stretch (low complexity) spans 439–450; the sequence is SDMSLSTSSSDS. The interval 506 to 775 is interaction with RAB5B; it reads LRKMSGVFSS…ARLLSSEARD (270 aa). S510 bears the Phosphoserine mark. T518 carries the phosphothreonine modification. Residues 627 to 766 form the VPS9 domain; the sequence is DGSWKQLKEN…IKNFQEEQAA (140 aa). Residues 796 to 887 enclose the Ras-associating domain; that stretch reads FQNYLRVAFQ…FHFVYKRIKS (92 aa).

The protein belongs to the RIN (Ras interaction/interference) family. In terms of assembly, homotetramer; probably composed of anti-parallel linkage of two parallel dimers. Interacts with Ras. Interacts with RAB5B, with a much higher affinity for GTP-bound activated RAB5B. Does not interact with other members of the Rab family.

It localises to the cytoplasm. Its function is as follows. Ras effector protein. May function as an upstream activator and/or downstream effector for RAB5B in endocytic pathway. May function as a guanine nucleotide exchange (GEF) of RAB5B, required for activating the RAB5 proteins by exchanging bound GDP for free GTP. The protein is Ras and Rab interactor 2 (Rin2) of Mus musculus (Mouse).